Here is a 526-residue protein sequence, read N- to C-terminus: Catalase (526 aa).

The segment covering 1-22 has biased composition (basic and acidic residues); sequence MADDREKSTDQMKLWKEGRGSQ. Residues 1-29 are disordered; that stretch reads MADDREKSTDQMKLWKEGRGSQRPDVLTT. Residues H75 and N148 contribute to the active site. The NADP(+) site is built by H194, S201, R203, N213, K237, W303, H305, and K306. Y358 contacts heme.

This sequence belongs to the catalase family. As to quaternary structure, homotetramer. Heme is required as a cofactor. It depends on NADP(+) as a cofactor.

It is found in the peroxisome matrix. The enzyme catalyses 2 H2O2 = O2 + 2 H2O. In terms of biological role, catalyzes the degradation of hydrogen peroxide (H(2)O(2)) generated by peroxisomal oxidases to water and oxygen, thereby protecting cells from the toxic effects of hydrogen peroxide. The protein is Catalase (cat) of Danio rerio (Zebrafish).